A 262-amino-acid chain; its full sequence is Acyl-[acyl-carrier-protein]--UDP-N-acetylglucosamine O-acyltransferase (262 aa).

Belongs to the transferase hexapeptide repeat family. LpxA subfamily. In terms of assembly, homotrimer.

It is found in the cytoplasm. It catalyses the reaction a (3R)-hydroxyacyl-[ACP] + UDP-N-acetyl-alpha-D-glucosamine = a UDP-3-O-[(3R)-3-hydroxyacyl]-N-acetyl-alpha-D-glucosamine + holo-[ACP]. The protein operates within glycolipid biosynthesis; lipid IV(A) biosynthesis; lipid IV(A) from (3R)-3-hydroxytetradecanoyl-[acyl-carrier-protein] and UDP-N-acetyl-alpha-D-glucosamine: step 1/6. In terms of biological role, involved in the biosynthesis of lipid A, a phosphorylated glycolipid that anchors the lipopolysaccharide to the outer membrane of the cell. This chain is Acyl-[acyl-carrier-protein]--UDP-N-acetylglucosamine O-acyltransferase, found in Vibrio cholerae serotype O1 (strain ATCC 39541 / Classical Ogawa 395 / O395).